A 390-amino-acid polypeptide reads, in one-letter code: Fluoride export protein 1 (390 aa).

Positions 1–22 (MVAPLVSESQSSSIEETDEQQQ) are disordered. Residues 1-72 (MVAPLVSESQ…RFLDKTQKYY (72 aa)) lie on the Cytoplasmic side of the membrane. Residues 73 to 93 (PVILNIVHGAIWGVLVRKGLM) form a helical membrane-spanning segment. Residues 94 to 100 (SLTTYSG) are Extracellular-facing. A helical transmembrane segment spans residues 101-121 (SFLSGVIWANFAACVVMGLAI). At 122 to 143 (DGEVFWIRLLEEKDYPNKGAIP) the chain is on the cytoplasmic side. The helical transmembrane segment at 144–164 (VYTGLTTGFCGTVSSFSSVIL) threads the bilayer. At 165 to 185 (EAFNKAADTDIGVRHHYPNGA) the chain is on the extracellular side. A helical membrane pass occupies residues 186 to 206 (YGIMQFLAVILAQFGLSIMGF). Topologically, residues 207 to 229 (HMGKQFSAVVDNYLPLVTKRIYK) are cytoplasmic. A helical membrane pass occupies residues 230-250 (VLELTSMILGVVLVVITCILI). At 251–256 (GVKKQG) the chain is on the extracellular side. The helical transmembrane segment at 257-279 (SWRSWTFSMLFAPFGALLRYYLS) threads the bilayer. Topologically, residues 280 to 290 (KFLNNKVSNFP) are cytoplasmic. A helical membrane pass occupies residues 291-311 (LGTFTANFLGTLLLAVFTLLA). The Extracellular portion of the chain corresponds to 312–338 (RGKLPGGKGHIVTNTIALHVLEGLDDG). A helical transmembrane segment spans residues 339–359 (FCGGLTTVSTFVVELFGLKTL). The Cytoplasmic segment spans residues 360-368 (FSYRYGTIS). A helical transmembrane segment spans residues 369 to 389 (ILVCFAGVVLILGSYNWSVGL). Position 390 (D390) is a topological domain, extracellular.

It belongs to the fluoride channel Fluc/FEX (TC 1.A.43) family.

It is found in the cell membrane. It carries out the reaction fluoride(in) = fluoride(out). Fluoride channel required for the rapid expulsion of cytoplasmic fluoride. This chain is Fluoride export protein 1, found in Candida albicans (strain SC5314 / ATCC MYA-2876) (Yeast).